Reading from the N-terminus, the 60-residue chain is Potassium channel toxin-like Tx677 (60 aa).

Residues 1–22 (MKISALVMITLLICSMMILCQG) form the signal peptide. 3 disulfide bridges follow: cysteine 30–cysteine 51, cysteine 36–cysteine 56, and cysteine 40–cysteine 58.

Belongs to the short scorpion toxin superfamily. Potassium channel inhibitor family. Expressed by the venom gland.

The protein resides in the secreted. Weakly inhibits Kv11.1/KCNH2/ERG1, Kv1.2/KCNA2 and Kv1.3/KCNA3 voltage-gated potassium channels. The protein is Potassium channel toxin-like Tx677 of Buthus israelis (Israeli scorpion).